The chain runs to 373 residues: Glutamate 5-kinase (373 aa).

Residue Lys15 coordinates ATP. Substrate contacts are provided by Ser55, Asp142, and Asn154. ATP is bound at residue 174–175; the sequence is TD. The PUA domain maps to 281 to 359; the sequence is RGSVVLDDGA…SQIEAVLGYV (79 aa).

This sequence belongs to the glutamate 5-kinase family.

The protein localises to the cytoplasm. It carries out the reaction L-glutamate + ATP = L-glutamyl 5-phosphate + ADP. It participates in amino-acid biosynthesis; L-proline biosynthesis; L-glutamate 5-semialdehyde from L-glutamate: step 1/2. In terms of biological role, catalyzes the transfer of a phosphate group to glutamate to form L-glutamate 5-phosphate. This is Glutamate 5-kinase from Nitrosomonas eutropha (strain DSM 101675 / C91 / Nm57).